The chain runs to 455 residues: Squamosa promoter-binding-like protein 16 (455 aa).

An SBP-type zinc finger spans residues 115–192 (CPSCAVDGCK…DGHNRRRRKP (78 aa)). Residues Cys118, Cys123, Cys140, His143, Cys159, Cys162, His166, and Cys178 each coordinate Zn(2+). Positions 175–191 (KRSCRKRLDGHNRRRRK) match the Bipartite nuclear localization signal motif. The disordered stretch occupies residues 182–204 (LDGHNRRRRKPQPDPMNSASYLA).

As to expression, expressed in young panicles.

Its subcellular location is the nucleus. In terms of biological role, trans-acting factor that binds specifically to the consensus nucleotide sequence 5'-TNCGTACAA-3'. May be involved in panicle development. The sequence is that of Squamosa promoter-binding-like protein 16 (SPL16) from Oryza sativa subsp. japonica (Rice).